A 366-amino-acid chain; its full sequence is Ubiquitin carboxyl-terminal hydrolase 46 (366 aa).

A USP domain is found at 35–365; it reads FGLVNFGNTC…SGYILFYQSR (331 aa). Catalysis depends on Cys44, which acts as the Nucleophile. Residues Cys182, Cys185, Cys229, and Cys232 each coordinate Zn(2+). The Proton acceptor role is filled by His313.

Belongs to the peptidase C19 family. USP12/USP46 subfamily. Interacts with WDR48. Interacts with WDR20. Interacts with DMWD. Component of the USP46/WDR20/WDR48 deubiquitinating complex. In terms of tissue distribution, detected in lung and spleen, and at lower levels in brain, kidney, testis and liver.

The protein localises to the cytoplasm. It catalyses the reaction Thiol-dependent hydrolysis of ester, thioester, amide, peptide and isopeptide bonds formed by the C-terminal Gly of ubiquitin (a 76-residue protein attached to proteins as an intracellular targeting signal).. Functionally, deubiquitinating enzyme that plays a role in behavior, possibly by regulating GABA action. May act by mediating the deubiquitination of GAD1/GAD67. Has almost no deubiquitinating activity by itself and requires the interaction with WDR48 to have a high activity. Not involved in deubiquitination of monoubiquitinated FANCD2. The polypeptide is Ubiquitin carboxyl-terminal hydrolase 46 (Rattus norvegicus (Rat)).